A 323-amino-acid polypeptide reads, in one-letter code: Large ribosomal subunit protein uL10 (323 aa).

The disordered stretch occupies residues 296–323 (AAPAAPSAAAKEEPEESDEDDFGMGGLF). Positions 308–317 (EPEESDEDDF) are enriched in acidic residues.

This sequence belongs to the universal ribosomal protein uL10 family. In terms of assembly, P0 forms a pentameric complex by interaction with dimers of P1 and P2. Phosphorylated.

Functionally, ribosomal protein P0 is the functional equivalent of E.coli protein L10. The sequence is that of Large ribosomal subunit protein uL10 (LIPO-A) from Leishmania infantum.